The sequence spans 245 residues: Orotidine 5'-phosphate decarboxylase (245 aa).

Substrate-binding positions include D22, K44, 71 to 80 (DLKFHDIPNT), T131, R192, Q201, G221, and R222. K73 serves as the catalytic Proton donor.

The protein belongs to the OMP decarboxylase family. Type 1 subfamily. As to quaternary structure, homodimer.

It carries out the reaction orotidine 5'-phosphate + H(+) = UMP + CO2. It functions in the pathway pyrimidine metabolism; UMP biosynthesis via de novo pathway; UMP from orotate: step 2/2. Its function is as follows. Catalyzes the decarboxylation of orotidine 5'-monophosphate (OMP) to uridine 5'-monophosphate (UMP). The sequence is that of Orotidine 5'-phosphate decarboxylase from Escherichia coli O81 (strain ED1a).